We begin with the raw amino-acid sequence, 87 residues long: Putative RNase MJ1548 (87 aa).

Active-site residues include arginine 65 and histidine 70. An RX(4)HXY motif motif is present at residues 65–72; sequence RNAIVHKY. Tyrosine 72 is subject to O-di-AMP-tyrosine.

This sequence belongs to the HepT RNase toxin family. In terms of assembly, homodimer, probably forms a complex with cognate antitoxin MJ1547. In terms of processing, modified by cognate antitoxin MJ1547; probably at least 2 successive AMPylation events occur on Tyr-72.

In terms of biological role, probable toxic component of a putative type VII toxin-antitoxin (TA) system, probably an RNase. Probably neutralized by cognate antitoxin MJ1547. Neutralization may be due to AMPylation by antitoxin MJ1547. In Methanocaldococcus jannaschii (strain ATCC 43067 / DSM 2661 / JAL-1 / JCM 10045 / NBRC 100440) (Methanococcus jannaschii), this protein is Putative RNase MJ1548.